A 402-amino-acid chain; its full sequence is Phosphoglycerate kinase (402 aa).

Substrate contacts are provided by residues 29-31, R45, 69-72, R125, and R158; these read DFN and HLGR. ATP contacts are provided by residues K209, E331, and 357-360; that span reads GGDT.

It belongs to the phosphoglycerate kinase family.

It is found in the cytoplasm. It carries out the reaction (2R)-3-phosphoglycerate + ATP = (2R)-3-phospho-glyceroyl phosphate + ADP. It participates in carbohydrate degradation; glycolysis; pyruvate from D-glyceraldehyde 3-phosphate: step 2/5. In Helicobacter pylori (strain J99 / ATCC 700824) (Campylobacter pylori J99), this protein is Phosphoglycerate kinase (pgk).